Consider the following 363-residue polypeptide: Cyanide hydratase (363 aa).

In terms of domain architecture, CN hydrolase spans 6-285; the sequence is YKAACVTSEP…DGLLFVDIDL (280 aa). The Proton acceptor role is filled by E46. The active site involves K128. C163 (nucleophile) is an active-site residue.

The protein belongs to the carbon-nitrogen hydrolase superfamily. Nitrilase family. As to quaternary structure, oligomer of dimers, forming left-handed helical fibers.

It carries out the reaction formamide = hydrogen cyanide + H2O. Catalyzes the hydration of cyanide to formamide. Degradation of cyanide may be important for plant pathogenic fungi in infection of cyanogenic plants. The chain is Cyanide hydratase (CyhAB) from Alternaria brassicicola (Dark leaf spot agent).